The following is a 751-amino-acid chain: Catalase-peroxidase 2 (751 aa).

The first 27 residues, 1 to 27 (MFKKTVPLLSAVAIAISFSAGTGVANA), serve as a signal peptide directing secretion. The segment at residues 115 to 238 (WHGAGTYRVQ…LAAVQMGLIY (124 aa)) is a cross-link (tryptophyl-tyrosyl-methioninium (Trp-Tyr) (with M-264)). The active-site Proton acceptor is histidine 116. The segment at residues 238–264 (YVNPEGPNGKPDPLLAAKDIRDTFGRM) is a cross-link (tryptophyl-tyrosyl-methioninium (Tyr-Met) (with W-115)). Histidine 279 lines the heme b pocket.

It belongs to the peroxidase family. Peroxidase/catalase subfamily. In terms of assembly, homodimer or homotetramer. It depends on heme b as a cofactor. Formation of the three residue Trp-Tyr-Met cross-link is important for the catalase, but not the peroxidase activity of the enzyme.

The enzyme catalyses H2O2 + AH2 = A + 2 H2O. It catalyses the reaction 2 H2O2 = O2 + 2 H2O. Bifunctional enzyme with both catalase and broad-spectrum peroxidase activity. In Idiomarina loihiensis (strain ATCC BAA-735 / DSM 15497 / L2-TR), this protein is Catalase-peroxidase 2.